Here is a 793-residue protein sequence, read N- to C-terminus: MSDYRSFGSNYHPSSQSRKISIGVMADSQPKRNLVPDKDDGDVIARVEKLKSATVTELQANKKEKSDLAAKQRNSAQVTGHVTSPWRSPRSSHRKLGTLESVLCKQTSSLSGSKGLNKGLNGAHQTPARESFQNCPISSPQHSLGELNGGRNDRVMDRSPERMEEPPSAVLQQKVASQREKMDKPGKETNGTTDVLRSKLWEILGKASPANNEDVNSETPEVEKTNFKLSQDKGSNDDPLIKPRHNSDSIETDSESPENATRRPVTRSLLQRRVGAKGVQKKTKAGANLGRKCTEQVNSVFSFEEGLRGKIGTAVNSSVMPKKQRGRRKNTVVKCRKAHSRKKDEADWSRKEASKSNTPPRSESTETGKRSSSSDKKGSSHDLHPQSKARKQKPDISTREGDFHPSPEAEAAALPEMSQGLSKNGDKHERPSNIFREKSVEPENEFQSPTFGYKAPISSPSPCCSPEASPLQPRNISPTLDETETPIFSFGTKKTSQGTTGQASDTEKRLPDFLEKKRDYSFRRESSPEPNEDLVLSDPSSDERDSDGSREDSPVLGHNISPEERETANWTNERSMLGPSSVKRNSNLKGIGRVVLSPPSPLSKGIDKTDSFQHCSEMDEDEDEGLGRAVALFAMALQNFERKLKSAAEKKSSEIIASVSEEIHLELENIKSHIITEAGKTSNLAKTKRKHAETRLQEQEEKMRMIHEKFKDDVSHHLEDFKSTIEELEANQSELKGSIKKQRTSHQKLIAHFEGGIETKLDDATKRIDSVNKSARGKMLQLKMIVAECLRDD.

Disordered stretches follow at residues 1 to 40 (MSDY…DKDD), 58 to 97 (LQAN…RKLG), 110 to 287 (LSGS…KAGA), and 305 to 586 (EGLR…KRNS). A compositionally biased stretch (polar residues) spans 7-19 (FGSNYHPSSQSRK). Residues 60 to 70 (ANKKEKSDLAA) are compositionally biased toward basic and acidic residues. The span at 72 to 86 (QRNSAQVTGHVTSPW) shows a compositional bias: polar residues. A compositionally biased stretch (low complexity) spans 110–122 (LSGSKGLNKGLNG). Residues 131 to 142 (SFQNCPISSPQH) are compositionally biased toward polar residues. 2 stretches are compositionally biased toward basic and acidic residues: residues 151-165 (RNDR…RMEE) and 177-187 (SQREKMDKPGK). Over residues 209–219 (PANNEDVNSET) the composition is skewed to polar residues. Over residues 221 to 248 (EVEKTNFKLSQDKGSNDDPLIKPRHNSD) the composition is skewed to basic and acidic residues. The span at 322 to 341 (KKQRGRRKNTVVKCRKAHSR) shows a compositional bias: basic residues. 4 stretches are compositionally biased toward basic and acidic residues: residues 342–354 (KKDE…KEAS), 363–385 (ESTE…DLHP), 392–407 (QKPD…HPSP), and 424–441 (NGDK…KSVE). 2 stretches are compositionally biased toward low complexity: residues 455-470 (APIS…EASP) and 491-502 (GTKKTSQGTTGQ). 2 stretches are compositionally biased toward basic and acidic residues: residues 505–527 (DTEK…RESS) and 541–553 (SDER…REDS). The stretch at 682-745 (SNLAKTKRKH…KGSIKKQRTS (64 aa)) forms a coiled coil.

Interacts with ASY1.

It localises to the chromosome. The protein localises to the nucleus. Required for normal meiosis in male and female gametophytes. Acts with ASY1 at the interface between the developing chromosome axes and the recombination machinery to ensure interhomolog recombination. Required for synaptonemal complex formation during meiosis. In Arabidopsis thaliana (Mouse-ear cress), this protein is Meiosis-specific protein ASY3.